The following is a 505-amino-acid chain: 2,3-bisphosphoglycerate-independent phosphoglycerate mutase (505 aa).

Residues Asp-11 and Ser-61 each coordinate Mn(2+). The active-site Phosphoserine intermediate is the Ser-61. Residues His-122, 152-153 (RD), Arg-183, Arg-189, 259-262 (RTDR), and Lys-332 each bind substrate. Mn(2+) contacts are provided by Asp-399, His-403, Asp-440, His-441, and His-458.

This sequence belongs to the BPG-independent phosphoglycerate mutase family. Monomer. It depends on Mn(2+) as a cofactor.

It catalyses the reaction (2R)-2-phosphoglycerate = (2R)-3-phosphoglycerate. Its pathway is carbohydrate degradation; glycolysis; pyruvate from D-glyceraldehyde 3-phosphate: step 3/5. Functionally, catalyzes the interconversion of 2-phosphoglycerate and 3-phosphoglycerate. This is 2,3-bisphosphoglycerate-independent phosphoglycerate mutase from Flavobacterium psychrophilum (strain ATCC 49511 / DSM 21280 / CIP 103535 / JIP02/86).